The following is a 272-amino-acid chain: uncharacterized protein (272 aa).

This is an uncharacterized protein from Sinorhizobium fredii (strain NBRC 101917 / NGR234).